We begin with the raw amino-acid sequence, 253 residues long: Triosephosphate isomerase (253 aa).

9–11 lines the substrate pocket; the sequence is NWK. His-95 functions as the Electrophile in the catalytic mechanism. Glu-167 functions as the Proton acceptor in the catalytic mechanism. Substrate-binding positions include Gly-173, Ser-213, and 234-235; that span reads GG. Ser-213 carries the post-translational modification Phosphoserine.

The protein belongs to the triosephosphate isomerase family. As to quaternary structure, homodimer.

The protein resides in the cytoplasm. It carries out the reaction D-glyceraldehyde 3-phosphate = dihydroxyacetone phosphate. Its pathway is carbohydrate biosynthesis; gluconeogenesis. The protein operates within carbohydrate degradation; glycolysis; D-glyceraldehyde 3-phosphate from glycerone phosphate: step 1/1. Its function is as follows. Involved in the gluconeogenesis. Catalyzes stereospecifically the conversion of dihydroxyacetone phosphate (DHAP) to D-glyceraldehyde-3-phosphate (G3P). This chain is Triosephosphate isomerase, found in Bacillus velezensis (strain DSM 23117 / BGSC 10A6 / LMG 26770 / FZB42) (Bacillus amyloliquefaciens subsp. plantarum).